Consider the following 756-residue polypeptide: Ent-kaur-16-ene synthase, chloroplastic (756 aa).

Asp496, Asp500, Asn639, and Glu647 together coordinate Mg(2+). A DDXXD motif motif is present at residues 496-500 (DDFFD).

This sequence belongs to the terpene synthase family. Mg(2+) is required as a cofactor. Highly expressed in panicles and at lower levels in leaves and stems.

It localises to the plastid. Its subcellular location is the chloroplast. It carries out the reaction ent-copalyl diphosphate = ent-kaur-16-ene + diphosphate. Its pathway is plant hormone biosynthesis; gibberellin biosynthesis. Catalyzes the conversion of ent-copalyl diphosphate to the gibberellin precursor ent-kaur-16-ene. The sequence is that of Ent-kaur-16-ene synthase, chloroplastic (KS1) from Oryza sativa subsp. japonica (Rice).